A 732-amino-acid chain; its full sequence is DNA-directed RNA polymerase subunit beta' (732 aa).

The Zn(2+) site is built by cysteine 70, cysteine 72, cysteine 85, and cysteine 88. The Mg(2+) site is built by aspartate 575, aspartate 577, and aspartate 579.

The protein belongs to the RNA polymerase beta' chain family. RpoC1 subfamily. In terms of assembly, in plastids the minimal PEP RNA polymerase catalytic core is composed of four subunits: alpha, beta, beta', and beta''. When a (nuclear-encoded) sigma factor is associated with the core the holoenzyme is formed, which can initiate transcription. Mg(2+) is required as a cofactor. Zn(2+) serves as cofactor.

It localises to the plastid. The protein localises to the chloroplast. It carries out the reaction RNA(n) + a ribonucleoside 5'-triphosphate = RNA(n+1) + diphosphate. Its function is as follows. DNA-dependent RNA polymerase catalyzes the transcription of DNA into RNA using the four ribonucleoside triphosphates as substrates. In Thalassiosira pseudonana (Marine diatom), this protein is DNA-directed RNA polymerase subunit beta'.